A 328-amino-acid polypeptide reads, in one-letter code: Cytochrome c biogenesis protein CcsA (328 aa).

8 helical membrane passes run 13-33, 46-66, 73-93, 101-121, 146-166, 234-254, 263-283, and 295-315; these read ISFSVVSIVLTIYFLTLLVNL, GIIITFFCITGLLFTRWIYSG, LYESLIFLSWSFSIIHMVSYF, LNAITAPSAIFIQGFATSGLL, MILGYGALLCGSLLSIALLVI, IISLGFIFLTVGILSGAVWAN, WDPKETWAFITWTIFAIYLHI, and AIVASIGFLLIWICYFGVNLL.

It belongs to the CcmF/CycK/Ccl1/NrfE/CcsA family. As to quaternary structure, may interact with Ccs1.

It is found in the plastid. The protein localises to the chloroplast thylakoid membrane. In terms of biological role, required during biogenesis of c-type cytochromes (cytochrome c6 and cytochrome f) at the step of heme attachment. This chain is Cytochrome c biogenesis protein CcsA, found in Capsella bursa-pastoris (Shepherd's purse).